A 234-amino-acid polypeptide reads, in one-letter code: tRNA1(Val) (adenine(37)-N6)-methyltransferase (234 aa).

It belongs to the methyltransferase superfamily. tRNA (adenine-N(6)-)-methyltransferase family.

The protein localises to the cytoplasm. The catalysed reaction is adenosine(37) in tRNA1(Val) + S-adenosyl-L-methionine = N(6)-methyladenosine(37) in tRNA1(Val) + S-adenosyl-L-homocysteine + H(+). Functionally, specifically methylates the adenine in position 37 of tRNA(1)(Val) (anticodon cmo5UAC). This Pedobacter heparinus (strain ATCC 13125 / DSM 2366 / CIP 104194 / JCM 7457 / NBRC 12017 / NCIMB 9290 / NRRL B-14731 / HIM 762-3) protein is tRNA1(Val) (adenine(37)-N6)-methyltransferase.